We begin with the raw amino-acid sequence, 310 residues long: L-lactate dehydrogenase (310 aa).

NAD(+) is bound by residues Val11, Asp32, and Arg37. Substrate contacts are provided by residues Gln79, Arg85, and 117-120 (NPVD). NAD(+) contacts are provided by residues 115–117 (VTN) and Thr140. Residue 145 to 148 (DTAR) coordinates substrate. 2 residues coordinate beta-D-fructose 1,6-bisphosphate: Arg150 and His165. Residue His172 is the Proton acceptor of the active site. The residue at position 221 (Tyr221) is a Phosphotyrosine. Thr230 serves as a coordination point for substrate.

The protein belongs to the LDH/MDH superfamily. LDH family. In terms of assembly, homotetramer.

It localises to the cytoplasm. It carries out the reaction (S)-lactate + NAD(+) = pyruvate + NADH + H(+). It functions in the pathway fermentation; pyruvate fermentation to lactate; (S)-lactate from pyruvate: step 1/1. Its activity is regulated as follows. Allosterically activated by fructose 1,6-bisphosphate (FBP). In terms of biological role, catalyzes the conversion of lactate to pyruvate. The protein is L-lactate dehydrogenase of Fervidobacterium nodosum (strain ATCC 35602 / DSM 5306 / Rt17-B1).